Consider the following 687-residue polypeptide: uncharacterized protein (687 aa).

A run of 14 helical transmembrane segments spans residues 28 to 48, 66 to 86, 94 to 114, 126 to 146, 154 to 174, 182 to 202, 211 to 231, 243 to 263, 287 to 307, 320 to 340, 348 to 368, 378 to 398, 414 to 434, and 480 to 500; these read IIFTALVFGVLVAATGQTIVV, WAVTSYLLGGTVVVVVAGKLG, VLLGSVVVFVVGSVLCGLSQT, GVGAGAISVTAYALAAEVVPL, GVLGAVFGVNTVTGPLLGGWL, WAFWINVPVSIAVLTVAATAV, PVIDYLGILVIAVATTALIMA, SATIVGLLIGAAVALGFFVWL, VLSFVVGFAMLGALTFVPIYL, LRTLPMVIGLLIASTGTGVLV, IFPVAGMALMAVAFLLMSQMD, LYLVVLGAGIGLSMQVLVLIV, VTFFRVVGASFGTATFGALFV, and LTQVFLCAVSVTVVGFILALL.

This sequence belongs to the major facilitator superfamily. TCR/Tet family.

The protein localises to the cell membrane. This is an uncharacterized protein from Mycobacterium tuberculosis (strain CDC 1551 / Oshkosh).